A 570-amino-acid chain; its full sequence is Biotin biosynthesis bifunctional protein BioHC (570 aa).

Residues 1–29 (MTEVNVRAAATPEEKPFLNRTRHEPANPQ) form a disordered region. The carboxylesterase stretch occupies residues 1–279 (MTEVNVRAAA…HISHPREVAT (279 aa)). Over residues 12–25 (PEEKPFLNRTRHEP) the composition is skewed to basic and acidic residues. Substrate is bound by residues Trp-41, 105–106 (SL), and 175–179 (FIALQ). The active-site Nucleophile is Ser-105. Active-site residues include Asp-239 and His-267. Substrate is bound at residue His-267. The segment at 280–570 (MINSFLRQQA…RKPLDESASA (291 aa)) is malonyl-ACP O-methyltransferase.

The protein in the N-terminal section; belongs to the AB hydrolase superfamily. Carboxylesterase BioH family. In the C-terminal section; belongs to the methyltransferase superfamily.

It catalyses the reaction a carboxylic ester + H2O = an alcohol + a carboxylate + H(+). The enzyme catalyses malonyl-[ACP] + S-adenosyl-L-methionine = malonyl-[ACP] methyl ester + S-adenosyl-L-homocysteine. The protein operates within cofactor biosynthesis; biotin biosynthesis. Converts the free carboxyl group of a malonyl-thioester to its methyl ester by transfer of a methyl group from S-adenosyl-L-methionine (SAM). It allows to synthesize pimeloyl-ACP via the fatty acid synthetic pathway. Its function is as follows. The physiological role of BioH is to remove the methyl group introduced by BioC when the pimeloyl moiety is complete. It allows to synthesize pimeloyl-ACP via the fatty acid synthetic pathway through the hydrolysis of the ester bonds of pimeloyl-ACP esters. The protein is Biotin biosynthesis bifunctional protein BioHC (bioC) of Teredinibacter turnerae (strain ATCC 39867 / T7901).